Consider the following 673-residue polypeptide: NACHT, LRR and PYD domains-containing protein 10 (673 aa).

Residues 1-92 (MALARANSPQ…VDYLNQVCLN (92 aa)) enclose the Pyrin domain. Positions 163-469 (PIVVMQGSAG…AMSFLVKEDQ (307 aa)) constitute an NACHT domain. 169–176 (GSAGTGKT) lines the ATP pocket. The tract at residues 578–673 (SDKKKSVSVT…DGEMIDKMNG (96 aa)) is disordered. The span at 584–597 (VSVTSSFSSGKVQS) shows a compositional bias: low complexity. Basic and acidic residues predominate over residues 633–648 (ASREKGHMEMNDKEDG). Residues 649–658 (GVEEQEDEEG) show a composition bias toward acidic residues. Positions 659-673 (QTLKKDGEMIDKMNG) are enriched in basic and acidic residues.

The protein belongs to the NLRP family. In terms of assembly, oligomerizes. Interacts with PYCARD. Also interacts with CASP1 and IL1B. Interacts with NOD1 and components of the NOD1 signaling pathway including RIPK2, NR2C2/TAK1 and IKBKG/NEMO. As to expression, expressed in skin, tongue, heart, colon and several cell lines of hematopoietic and myocytic origin but not in kidney, skeletal muscle, spleen, liver, lung, thymus, brain or small intestine (at protein level).

It is found in the cytoplasm. The protein resides in the cell membrane. Its function is as follows. Inhibits autoprocessing of CASP1, CASP1-dependent IL1B secretion, PYCARD aggregation and PYCARD-mediated apoptosis but not apoptosis induced by FAS or BID. Displays anti-inflammatory activity. Required for immunity against C.albicans infection. Involved in the innate immune response by contributing to pro-inflammatory cytokine release in response to invasive bacterial infection. Contributes to T-cell-mediated inflammatory responses in the skin. Plays a role in protection against periodontitis through its involvement in induction of IL1A via ERK activation in oral epithelial cells infected with periodontal pathogens. Exhibits both ATPase and GTPase activities. The polypeptide is NACHT, LRR and PYD domains-containing protein 10 (Nlrp10) (Mus musculus (Mouse)).